Reading from the N-terminus, the 456-residue chain is Cysteine synthase 2 (456 aa).

Residues 9–29 (VYGTVALTAAFAAGILVTLGF) form a helical membrane-spanning segment.

This sequence belongs to the cysteine synthase/cystathionine beta-synthase family. Pyridoxal 5'-phosphate serves as cofactor.

It is found in the mitochondrion outer membrane. It catalyses the reaction O-acetyl-L-serine + hydrogen sulfide = L-cysteine + acetate. Its function is as follows. Putative cysteine synthase that catalyzes the conversion of O-acetyl-L-serine (OAS) into cysteine, the last step in the cysteine biosynthesis pathway. However, in contrast to cysteine synthase cys-17, this CS-like protein may not function in cysteine biosynthesis. This is Cysteine synthase 2 from Neurospora crassa (strain ATCC 24698 / 74-OR23-1A / CBS 708.71 / DSM 1257 / FGSC 987).